We begin with the raw amino-acid sequence, 78 residues long: Large ribosomal subunit protein bL28 (78 aa).

The tract at residues 1–20 is disordered; that stretch reads MSRVCQVTGKGPVTGNNISH.

Belongs to the bacterial ribosomal protein bL28 family.

The chain is Large ribosomal subunit protein bL28 from Stutzerimonas stutzeri (strain A1501) (Pseudomonas stutzeri).